Consider the following 235-residue polypeptide: Aspartate/glutamate leucyltransferase (235 aa).

The protein belongs to the R-transferase family. Bpt subfamily.

It localises to the cytoplasm. It catalyses the reaction N-terminal L-glutamyl-[protein] + L-leucyl-tRNA(Leu) = N-terminal L-leucyl-L-glutamyl-[protein] + tRNA(Leu) + H(+). The catalysed reaction is N-terminal L-aspartyl-[protein] + L-leucyl-tRNA(Leu) = N-terminal L-leucyl-L-aspartyl-[protein] + tRNA(Leu) + H(+). In terms of biological role, functions in the N-end rule pathway of protein degradation where it conjugates Leu from its aminoacyl-tRNA to the N-termini of proteins containing an N-terminal aspartate or glutamate. In Pseudomonas fluorescens (strain ATCC BAA-477 / NRRL B-23932 / Pf-5), this protein is Aspartate/glutamate leucyltransferase.